The chain runs to 288 residues: Acetyl-coenzyme A carboxylase carboxyl transferase subunit beta (288 aa).

In terms of domain architecture, CoA carboxyltransferase N-terminal spans 34-288 (LFAKCPGCKQ…TLLSFHGGVQ (255 aa)). Zn(2+) contacts are provided by C38, C41, C56, and C59. The C4-type zinc finger occupies 38-59 (CPGCKQAIYQKDLGQAKICPNC).

The protein belongs to the AccD/PCCB family. As to quaternary structure, acetyl-CoA carboxylase is a heterohexamer composed of biotin carboxyl carrier protein (AccB), biotin carboxylase (AccC) and two subunits each of ACCase subunit alpha (AccA) and ACCase subunit beta (AccD). It depends on Zn(2+) as a cofactor.

It localises to the cytoplasm. It carries out the reaction N(6)-carboxybiotinyl-L-lysyl-[protein] + acetyl-CoA = N(6)-biotinyl-L-lysyl-[protein] + malonyl-CoA. It participates in lipid metabolism; malonyl-CoA biosynthesis; malonyl-CoA from acetyl-CoA: step 1/1. Functionally, component of the acetyl coenzyme A carboxylase (ACC) complex. Biotin carboxylase (BC) catalyzes the carboxylation of biotin on its carrier protein (BCCP) and then the CO(2) group is transferred by the transcarboxylase to acetyl-CoA to form malonyl-CoA. The sequence is that of Acetyl-coenzyme A carboxylase carboxyl transferase subunit beta from Streptococcus thermophilus (strain CNRZ 1066).